The following is a 571-amino-acid chain: uncharacterized protein (571 aa).

5 consecutive transmembrane segments (helical) span residues 10 to 29 (VRLH…HFIG), 36 to 55 (VSLG…GLLF), 65 to 87 (WAFF…FASL), 96 to 118 (ALAV…LFRF), and 166 to 188 (ATTY…PRLL). The region spanning 294-378 (TEVDDQELLS…IATAARNLGF (85 aa)) is the RCK C-terminal domain. 6 consecutive transmembrane segments (helical) span residues 388-406 (LVYL…LLQV), 411-433 (VPLG…WLYS), 446-465 (LRLL…GLAA), 480-502 (LFAK…GLLL), 509-531 (LPPV…LNAL), and 546-568 (VPFA…CAVA).

This sequence belongs to the AAE transporter (TC 2.A.81) family.

The protein localises to the cell membrane. This is an uncharacterized protein from Bordetella parapertussis (strain 12822 / ATCC BAA-587 / NCTC 13253).